Here is a 100-residue protein sequence, read N- to C-terminus: MAEEHNHNHEEENIIWITNEEGKEEAFEILFDFDSEDFDKSYVLYFPAGKSEDEEIEILASSYIQDEEGKQGQLKPVETDEEWDMIEEILATFLADEDEE.

This sequence belongs to the UPF0473 family.

The chain is UPF0473 protein lwe1514 from Listeria welshimeri serovar 6b (strain ATCC 35897 / DSM 20650 / CCUG 15529 / CIP 8149 / NCTC 11857 / SLCC 5334 / V8).